The primary structure comprises 171 residues: Co-chaperone protein HscB (171 aa).

The region spanning 2–74 (DYFTLFGLPA…LTRAEYLLSL (73 aa)) is the J domain.

The protein belongs to the HscB family. As to quaternary structure, interacts with HscA and stimulates its ATPase activity. Interacts with IscU.

Co-chaperone involved in the maturation of iron-sulfur cluster-containing proteins. Seems to help targeting proteins to be folded toward HscA. This chain is Co-chaperone protein HscB, found in Salmonella arizonae (strain ATCC BAA-731 / CDC346-86 / RSK2980).